We begin with the raw amino-acid sequence, 657 residues long: Tetracycline resistance protein TetQ (657 aa).

Residues 17 to 260 (MNIINLGILA…AISSFILPPE (244 aa)) form the tr-type G domain. Residues 26-33 (AHIDAGKT), 90-94 (DTPGH), and 144-147 (NKID) contribute to the GTP site.

Belongs to the TRAFAC class translation factor GTPase superfamily. Classic translation factor GTPase family. TetM/TetO subfamily.

Functionally, abolishes the inhibitory effect of tetracycline on protein synthesis by non-covalently modifying ribosomes. Confers mild resistance to tetracycline when expressed in E.coli. The sequence is that of Tetracycline resistance protein TetQ (tetQ) from Bacteroides fragilis.